A 33-amino-acid polypeptide reads, in one-letter code: uncharacterized protein (33 aa).

This is an uncharacterized protein from Archaeoglobus fulgidus (strain ATCC 49558 / DSM 4304 / JCM 9628 / NBRC 100126 / VC-16).